Reading from the N-terminus, the 116-residue chain is CDKN2AIP N-terminal-like protein (116 aa).

At Met1 the chain carries N-acetylmethionine. The XRN2-binding (XTBD) domain occupies 24 to 116; sequence AEQFRSYSES…RSELMKKHQS (93 aa).

Belongs to the CARF family. In terms of assembly, interacts with XRN2; the interaction is direct.

The polypeptide is CDKN2AIP N-terminal-like protein (CDKN2AIPNL) (Bos taurus (Bovine)).